The chain runs to 420 residues: Acetylornithine aminotransferase (420 aa).

Residues 118-119 and Phe-151 each bind pyridoxal 5'-phosphate; that span reads GA. Arg-154 is a binding site for N(2)-acetyl-L-ornithine. A pyridoxal 5'-phosphate-binding site is contributed by 242–245; the sequence is DEVQ. Lys-271 bears the N6-(pyridoxal phosphate)lysine mark. Ser-298 is a N(2)-acetyl-L-ornithine binding site. Residue Thr-299 participates in pyridoxal 5'-phosphate binding.

The protein belongs to the class-III pyridoxal-phosphate-dependent aminotransferase family. ArgD subfamily. Homodimer. It depends on pyridoxal 5'-phosphate as a cofactor.

The protein resides in the cytoplasm. It carries out the reaction N(2)-acetyl-L-ornithine + 2-oxoglutarate = N-acetyl-L-glutamate 5-semialdehyde + L-glutamate. The protein operates within amino-acid biosynthesis; L-arginine biosynthesis; N(2)-acetyl-L-ornithine from L-glutamate: step 4/4. The polypeptide is Acetylornithine aminotransferase (Parasynechococcus marenigrum (strain WH8102)).